The sequence spans 1700 residues: Balbiani ring protein 3 (1700 aa).

Positions 1 to 20 are cleaved as a signal peptide; the sequence is MKTLSSLLLVLAVNVLLIQA.

In terms of tissue distribution, salivary gland.

It is found in the secreted. Functionally, used by the larvae to construct a supramolecular structure, the larval tube. Balbiani ring protein 3 could play a role as a transport protein that binds to other proteins intracellularly and in the gland lumen in order to prevent these from forming water-insoluble fibers too early. This chain is Balbiani ring protein 3 (BR3), found in Chironomus tentans (Midge).